Consider the following 691-residue polypeptide: Kinetochore protein NDC80 (691 aa).

Positions 1–95 (MQSSTSTDQH…LNDKSNSRNS (95 aa)) are disordered. Residues 10 to 19 (HVLHHMDPHR) are compositionally biased toward basic and acidic residues. Positions 20–42 (FTSQIPTATSSQLRRRNSTNQGL) are enriched in polar residues. Thr38 is subject to Phosphothreonine. A compositionally biased stretch (low complexity) spans 54–65 (TISGTGIPTGGI). Phosphothreonine is present on Thr248. Coiled coils occupy residues 376 to 446 (GKLE…SIKS) and 522 to 686 (KKSI…FETE).

Belongs to the NDC80/HEC1 family. Component of the NDC80 complex, which consists of NDC80, NUF2, SPC24 and SPC25. The NDC80 complex is formed by two subcomplexes, NDC80-NUF2 and SPC24-SPC25, which are joined end-to-end through their coiled-coil domains. It has a rod-like structure with a length of 570 Angstroms and globular domains at either end. The NDC80-NUF2 globular domains are probably directed to microtubules, the SPC24-SPC25 globular domains to the centromere. NDC80 probably interacts with SMC1 and SMC2. Also interacts with KIN3. Interacts with DMC1.

Its subcellular location is the nucleus. It is found in the chromosome. It localises to the centromere. The protein localises to the kinetochore. Acts as a component of the essential kinetochore-associated NDC80 complex, which is involved in chromosome segregation and spindle checkpoint activity. This Saccharomyces cerevisiae (strain ATCC 204508 / S288c) (Baker's yeast) protein is Kinetochore protein NDC80.